Here is a 211-residue protein sequence, read N- to C-terminus: MLTIALSKGRILDDTLPLLAAAGIVPSENPDKSRKLIIPTSLPDVRLLIVRATDVPTYVEHGAADLGVAGKDVLMEYGGQGLYEPLDLRIANCKLMTAGAIGAAEPKGRLRVATKFVNVAKRYYAEQGRQVDVIKLYGSMELAPLVGLADKIIDVVDTGNTLRANGLEPQELIATISSRLVVNKASMKMQHARIQALIDTLRDAVEARHRH.

This sequence belongs to the ATP phosphoribosyltransferase family. Short subfamily. In terms of assembly, heteromultimer composed of HisG and HisZ subunits.

It is found in the cytoplasm. The enzyme catalyses 1-(5-phospho-beta-D-ribosyl)-ATP + diphosphate = 5-phospho-alpha-D-ribose 1-diphosphate + ATP. The protein operates within amino-acid biosynthesis; L-histidine biosynthesis; L-histidine from 5-phospho-alpha-D-ribose 1-diphosphate: step 1/9. In terms of biological role, catalyzes the condensation of ATP and 5-phosphoribose 1-diphosphate to form N'-(5'-phosphoribosyl)-ATP (PR-ATP). Has a crucial role in the pathway because the rate of histidine biosynthesis seems to be controlled primarily by regulation of HisG enzymatic activity. The chain is ATP phosphoribosyltransferase from Pseudomonas paraeruginosa (strain DSM 24068 / PA7) (Pseudomonas aeruginosa (strain PA7)).